The sequence spans 85 residues: Small ribosomal subunit protein bS20 (85 aa).

It belongs to the bacterial ribosomal protein bS20 family.

Binds directly to 16S ribosomal RNA. This is Small ribosomal subunit protein bS20 from Borreliella afzelii (strain PKo) (Borrelia afzelii).